Here is a 248-residue protein sequence, read N- to C-terminus: MSGHSKWANIKRQKGAADAVRGKIFTKLGREIQIAVRMGGADPSSNSKLKDVIAKCKANNMPNDNIQRSIKRASGETDGSNYEEITYEGYGPGGVAVICECTTDNRNRTAGDLRHYFDKFGGNLGQSGCVSYMFNKKGVIVIEKNDKVNEETLMMEALDAGAEDFDSDDNCYEIITDPADFSTVREALEAKGYEFIEAEVSMIPTTTTKLTDPEQIKFMDKLIEALEDLDDVSNVYHSWEQDEENEEE.

The protein belongs to the TACO1 family.

It is found in the cytoplasm. The polypeptide is Probable transcriptional regulatory protein Ccel_0181 (Ruminiclostridium cellulolyticum (strain ATCC 35319 / DSM 5812 / JCM 6584 / H10) (Clostridium cellulolyticum)).